We begin with the raw amino-acid sequence, 102 residues long: Small ribosomal subunit protein uS10 (102 aa).

Belongs to the universal ribosomal protein uS10 family. As to quaternary structure, part of the 30S ribosomal subunit.

Its function is as follows. Involved in the binding of tRNA to the ribosomes. The sequence is that of Small ribosomal subunit protein uS10 from Coprothermobacter proteolyticus (strain ATCC 35245 / DSM 5265 / OCM 4 / BT).